The chain runs to 161 residues: Allophycocyanin alpha chain (161 aa).

Position 71 is an N4-methylasparagine (Asn71). Cys81 contacts (2R,3E)-phycocyanobilin.

It belongs to the phycobiliprotein family. In terms of assembly, heterodimer of an alpha and a beta chain. Post-translationally, contains one covalently linked phycocyanobilin chromophore.

It is found in the cellular thylakoid membrane. Functionally, light-harvesting photosynthetic bile pigment-protein from the phycobiliprotein complex. Allophycocyanin has a maximum absorption at approximately 650 nanometers. The polypeptide is Allophycocyanin alpha chain (apcA) (Thermosynechococcus vestitus (strain NIES-2133 / IAM M-273 / BP-1)).